The sequence spans 426 residues: MAKQIQAVRGMNDCLPGDTQVWQKVENILRETVASFGYQEIRFPIVESTDLFKRSIGEVTDIVEKEMYTFADRNGDLLTLRPEGTAVCVRAGNENGLLYNQEQRLWYMGPMFRHERPQKGRYRQFHQFGLETFGIASADIDAEVILLTAQLWESFGISEHVRLELNSLGSNEARANYRDALVAYLEQHLDVLDEDSKRRMYSNPLRVLDSKNPDVQAILINAPKLSEHLDTESKEHFANLCERLDAAGVKYTINEKLVRGLDYYNRTVFEWITDSLGAQGTVCAGGRYDGLVEQLGGKATPAVGFAMGLERLVLLLQALECVGDIRRNADVYLASMGDKASIQAPIIAATLRRDVPNLRVMVHAGGGNFKKQLKRADKSDALVAVIIGEDELEQGVVTIKYLRERKEQVTLELEQAKALLAELINS.

Belongs to the class-II aminoacyl-tRNA synthetase family. Homodimer.

It is found in the cytoplasm. The enzyme catalyses tRNA(His) + L-histidine + ATP = L-histidyl-tRNA(His) + AMP + diphosphate + H(+). The polypeptide is Histidine--tRNA ligase (Pseudoalteromonas translucida (strain TAC 125)).